The sequence spans 429 residues: Probable M18 family aminopeptidase 2 (429 aa).

Positions 82, 156, and 401 each coordinate Zn(2+).

It belongs to the peptidase M18 family. Zn(2+) is required as a cofactor.

This is Probable M18 family aminopeptidase 2 from Pseudomonas aeruginosa (strain LESB58).